We begin with the raw amino-acid sequence, 429 residues long: Cholesterol 7-desaturase nvd (429 aa).

Residues 23–43 traverse the membrane as a helical segment; it reads FVICLWTLAVTFIRIYWIFFV. One can recognise a Rieske domain in the interval 98–201; it reads YGILKSSQLK…SQEVDGFIFI (104 aa). [2Fe-2S] cluster contacts are provided by Cys138, His140, Cys158, and His161.

Belongs to the cholesterol 7-desaturase family. Requires [2Fe-2S] cluster as cofactor. In terms of tissue distribution, expressed predominantly in the prothoracic gland and weakly in brain and malpighian tubules.

Its subcellular location is the membrane. It carries out the reaction cholesterol + NADPH + O2 + H(+) = 7-dehydrocholesterol + NADP(+) + 2 H2O. The catalysed reaction is cholesterol + NADH + O2 + H(+) = 7-dehydrocholesterol + NAD(+) + 2 H2O. It functions in the pathway steroid hormone biosynthesis; dafachronic acid biosynthesis. Catalyzes the production of 7-dehydrocholesterol (7-DHC or cholesta-5,7-dien-3beta-ol) by inserting a double bond (desaturating) at the C7-C8 single bond of cholesterol. Essential regulator of steroid biosynthesis, as this reaction is the first step in the synthesis of the steroid hormone Delta(7)-dafachronic acid. Required for insect molting, metamorphosis and body growth throughout development via the regulation of ecdysteroid biosynthesis in the prothoracic gland. In Drosophila melanogaster (Fruit fly), this protein is Cholesterol 7-desaturase nvd.